The chain runs to 246 residues: Probable transcriptional regulatory protein APP7_1210 (246 aa).

It belongs to the TACO1 family.

The protein resides in the cytoplasm. This Actinobacillus pleuropneumoniae serotype 7 (strain AP76) protein is Probable transcriptional regulatory protein APP7_1210.